A 260-amino-acid chain; its full sequence is Small ribosomal subunit protein uS3 (260 aa).

One can recognise a KH type-2 domain in the interval 39–114 (LRQYIEQKLG…QIRINVVEVQ (76 aa)). The segment at 218-260 (QEVATPPPSPRDRDRDRGDRDREPRRRQQQRRRQQFEDRSNEG) is disordered. 2 stretches are compositionally biased toward basic and acidic residues: residues 227–243 (PRDR…EPRR) and 251–260 (QQFEDRSNEG).

This sequence belongs to the universal ribosomal protein uS3 family. In terms of assembly, part of the 30S ribosomal subunit. Forms a tight complex with proteins S10 and S14.

Binds the lower part of the 30S subunit head. Binds mRNA in the 70S ribosome, positioning it for translation. This chain is Small ribosomal subunit protein uS3, found in Nostoc sp. (strain PCC 7120 / SAG 25.82 / UTEX 2576).